The primary structure comprises 1750 residues: Protein TIC 214 (1750 aa).

Helical transmembrane passes span 12-32 (KIIN…ALSI), 69-89 (FIMG…YVAL), 97-117 (ILAL…SFFA), 129-149 (LEIY…SCIL), 177-197 (FAWF…LVWI), and 216-236 (IFVI…SIQC). Basic and acidic residues predominate over residues 260-277 (RERLQKEEERGVEKKEQS). Disordered regions lie at residues 260–282 (RERL…EEDP), 617–638 (ATTT…KKES), 718–738 (STDK…KQRE), 1205–1225 (RNSR…PKPV), and 1419–1512 (ETDS…NKKE). The span at 617–629 (ATTTNSKTNTTKD) shows a compositional bias: low complexity. A compositionally biased stretch (basic and acidic residues) spans 727-738 (KKEEKRENKQRE). Over residues 1420-1512 (TDSKQKSETD…TKSDKKNKKE (93 aa)) the composition is skewed to basic and acidic residues.

It belongs to the TIC214 family. As to quaternary structure, part of the Tic complex.

The protein localises to the plastid. It localises to the chloroplast inner membrane. Involved in protein precursor import into chloroplasts. May be part of an intermediate translocation complex acting as a protein-conducting channel at the inner envelope. The polypeptide is Protein TIC 214 (Cuscuta reflexa (Southern Asian dodder)).